The following is an 85-amino-acid chain: CRISPR-associated endoribonuclease Cas2 (85 aa).

D8 contacts Mg(2+).

Belongs to the CRISPR-associated endoribonuclease Cas2 protein family. In terms of assembly, homodimer, forms a heterotetramer with a Cas1 homodimer. Mg(2+) serves as cofactor.

In terms of biological role, CRISPR (clustered regularly interspaced short palindromic repeat), is an adaptive immune system that provides protection against mobile genetic elements (viruses, transposable elements and conjugative plasmids). CRISPR clusters contain sequences complementary to antecedent mobile elements and target invading nucleic acids. CRISPR clusters are transcribed and processed into CRISPR RNA (crRNA). Functions as a ssRNA-specific endoribonuclease. Involved in the integration of spacer DNA into the CRISPR cassette. The sequence is that of CRISPR-associated endoribonuclease Cas2 from Thermococcus kodakarensis (strain ATCC BAA-918 / JCM 12380 / KOD1) (Pyrococcus kodakaraensis (strain KOD1)).